A 717-amino-acid chain; its full sequence is uncharacterized protein (717 aa).

The protein belongs to the asfivirus C717R family.

The protein localises to the virion. This is an uncharacterized protein from African swine fever virus (strain Badajoz 1971 Vero-adapted) (Ba71V).